A 198-amino-acid polypeptide reads, in one-letter code: NAD(P)H dehydrogenase (quinone) (198 aa).

One can recognise a Flavodoxin-like domain in the interval 4–189 (VLVLYYSMYG…SIARYQGEYV (186 aa)). FMN is bound by residues 10-15 (SMYGHI) and 78-80 (TRF). Y12 lines the NAD(+) pocket. Residue W98 coordinates substrate. Residues 113-118 (STGTGG) and H133 contribute to the FMN site.

The protein belongs to the WrbA family. FMN serves as cofactor.

It carries out the reaction a quinone + NADH + H(+) = a quinol + NAD(+). The enzyme catalyses a quinone + NADPH + H(+) = a quinol + NADP(+). This is NAD(P)H dehydrogenase (quinone) from Shigella dysenteriae serotype 1 (strain Sd197).